The sequence spans 929 residues: Valine--tRNA ligase (929 aa).

The 'HIGH' region signature appears at 40–50; sequence PNVTGHLHMGH. Residues 522-526 carry the 'KMSKS' region motif; sequence KMSKS. Lysine 525 contributes to the ATP binding site. Residues 855-926 are a coiled coil; that stretch reads LAGLIDKEAE…LEQQHAEITD (72 aa).

This sequence belongs to the class-I aminoacyl-tRNA synthetase family. ValS type 1 subfamily. As to quaternary structure, monomer.

Its subcellular location is the cytoplasm. It carries out the reaction tRNA(Val) + L-valine + ATP = L-valyl-tRNA(Val) + AMP + diphosphate. Functionally, catalyzes the attachment of valine to tRNA(Val). As ValRS can inadvertently accommodate and process structurally similar amino acids such as threonine, to avoid such errors, it has a 'posttransfer' editing activity that hydrolyzes mischarged Thr-tRNA(Val) in a tRNA-dependent manner. This is Valine--tRNA ligase from Nitrosococcus oceani (strain ATCC 19707 / BCRC 17464 / JCM 30415 / NCIMB 11848 / C-107).